The chain runs to 904 residues: Eukaryotic translation initiation factor 3 subunit C (904 aa).

2 disordered regions span residues 1-38 (MSRFFAGGSESDSDSSSDSEPIQRQTAPQFTFSDEEED) and 156-290 (FRES…TSEK). A compositionally biased stretch (polar residues) spans 22–32 (IQRQTAPQFTF). Residues 161-183 (DAADDEDEEEEKKEEEESDDEEA) are compositionally biased toward acidic residues. Residues 194–206 (FKKDTVEKVKVEK) show a composition bias toward basic and acidic residues. The segment covering 207–232 (DDDDSDDSIDWGQDSDSDESSSEEEA) has biased composition (acidic residues). A compositionally biased stretch (basic and acidic residues) spans 237–247 (IRERFLKRPEK). Residues 257-272 (KEKKKTKETKDSRKKK) show a composition bias toward basic residues. The PCI domain maps to 636-812 (FHMHINLELL…ETVVLHRSEP (177 aa)). Residues 847–904 (RGGNQGYNRDRQNYRNQNQNRENWNNNRRQDRGNRNRNQNRDREQREQHRVEFEEKAE) are disordered. Over residues 860 to 873 (YRNQNQNRENWNNN) the composition is skewed to low complexity. Residues 874–904 (RRQDRGNRNRNQNRDREQREQHRVEFEEKAE) are compositionally biased toward basic and acidic residues.

This sequence belongs to the eIF-3 subunit C family. In terms of assembly, component of the eukaryotic translation initiation factor 3 (eIF-3) complex.

The protein localises to the cytoplasm. Functionally, component of the eukaryotic translation initiation factor 3 (eIF-3) complex, which is involved in protein synthesis of a specialized repertoire of mRNAs and, together with other initiation factors, stimulates binding of mRNA and methionyl-tRNAi to the 40S ribosome. The eIF-3 complex specifically targets and initiates translation of a subset of mRNAs involved in cell proliferation. The sequence is that of Eukaryotic translation initiation factor 3 subunit C from Culex quinquefasciatus (Southern house mosquito).